Here is a 314-residue protein sequence, read N- to C-terminus: L-lactate dehydrogenase (314 aa).

Residues Val-16, Asp-37, Lys-42, Tyr-68, and 82-83 (GV) each bind NAD(+). Positions 85 and 91 each coordinate substrate. Residues Ser-104, 121-123 (ASN), and Thr-146 contribute to the NAD(+) site. 123–126 (NPVD) is a substrate binding site. Substrate is bound at residue 151–154 (DTTR). Beta-D-fructose 1,6-bisphosphate contacts are provided by Arg-156 and His-171. The active-site Proton acceptor is His-178. Tyr-223 bears the Phosphotyrosine mark. Thr-232 is a binding site for substrate.

This sequence belongs to the LDH/MDH superfamily. LDH family. In terms of assembly, homotetramer.

The protein localises to the cytoplasm. The catalysed reaction is (S)-lactate + NAD(+) = pyruvate + NADH + H(+). The protein operates within fermentation; pyruvate fermentation to lactate; (S)-lactate from pyruvate: step 1/1. Its activity is regulated as follows. Allosterically activated by fructose 1,6-bisphosphate (FBP). Functionally, catalyzes the conversion of lactate to pyruvate. The polypeptide is L-lactate dehydrogenase (Lactococcus lactis subsp. cremoris (strain MG1363)).